The following is a 713-amino-acid chain: Catalase-peroxidase (713 aa).

Residues 77-200 constitute a cross-link (tryptophyl-tyrosyl-methioninium (Trp-Tyr) (with M-226)); it reads WHSAGTYRTT…LGATVMGLIY (124 aa). The active-site Proton acceptor is H78. Positions 200-226 form a cross-link, tryptophyl-tyrosyl-methioninium (Tyr-Met) (with W-77); the sequence is YVNPEGPDGEPDLEGSAANIRESFGRM. Heme b is bound at residue H241.

It belongs to the peroxidase family. Peroxidase/catalase subfamily. In terms of assembly, homodimer or homotetramer. Heme b serves as cofactor. Post-translationally, formation of the three residue Trp-Tyr-Met cross-link is important for the catalase, but not the peroxidase activity of the enzyme.

The catalysed reaction is H2O2 + AH2 = A + 2 H2O. The enzyme catalyses 2 H2O2 = O2 + 2 H2O. In terms of biological role, bifunctional enzyme with both catalase and broad-spectrum peroxidase activity. This is Catalase-peroxidase from Natronomonas pharaonis (strain ATCC 35678 / DSM 2160 / CIP 103997 / JCM 8858 / NBRC 14720 / NCIMB 2260 / Gabara) (Halobacterium pharaonis).